Consider the following 82-residue polypeptide: Small ribosomal subunit protein bS16 (82 aa).

This sequence belongs to the bacterial ribosomal protein bS16 family.

The sequence is that of Small ribosomal subunit protein bS16 from Tolumonas auensis (strain DSM 9187 / NBRC 110442 / TA 4).